The chain runs to 118 residues: Co-chaperonin GroES (118 aa).

This sequence belongs to the GroES chaperonin family. As to quaternary structure, heptamer of 7 subunits arranged in a ring. Interacts with the chaperonin GroEL.

It localises to the cytoplasm. Functionally, together with the chaperonin GroEL, plays an essential role in assisting protein folding. The GroEL-GroES system forms a nano-cage that allows encapsulation of the non-native substrate proteins and provides a physical environment optimized to promote and accelerate protein folding. GroES binds to the apical surface of the GroEL ring, thereby capping the opening of the GroEL channel. The polypeptide is Co-chaperonin GroES (Helicobacter pylori (strain P12)).